The primary structure comprises 299 residues: Proline iminopeptidase (299 aa).

The 247-residue stretch at V26–H272 folds into the AB hydrolase-1 domain. The Nucleophile role is filled by S103. Residue D245 is part of the active site. H272 functions as the Proton donor in the catalytic mechanism.

This sequence belongs to the peptidase S33 family. As to quaternary structure, monomer.

It catalyses the reaction Release of N-terminal proline from a peptide.. Releases the N-terminal proline from various substrates. This chain is Proline iminopeptidase, found in Chitinophaga pinensis (strain ATCC 43595 / DSM 2588 / LMG 13176 / NBRC 15968 / NCIMB 11800 / UQM 2034).